The sequence spans 232 residues: TIR domain-containing adapter molecule 2 (232 aa).

A compositionally biased stretch (basic and acidic residues) spans 1–39 (MGVGKSKLDKCPLSWHKKDSVDADQDGHESDSKNSEEAC). The interval 1–70 (MGVGKSKLDK…EAKGAGPEEQ (70 aa)) is disordered. Residue Gly2 is the site of N-myristoyl glycine attachment. The 153-residue stretch at 74 to 226 (EFLKFVILHA…SIWKETRSVS (153 aa)) folds into the TIR domain. The residue at position 164 (Tyr164) is a Phosphotyrosine.

Homodimer. Interacts with TLR4, TICAM1, IRF3 and IRF7 in response to LPS. Interacts with IL1R1, IL1RAP, IRAK2, IRAK3 and TRAF6. Interacts with protein kinase-inactive mutants of IRAK1 and IRAK4. Isoform 1 interacts with isoform 2; the interaction occurs in late endosomes and disrupts the interaction between isoform 1 and TICAM1. Interacts with MYD88; the interaction decreases after IL-18 stimulation in a time-dependent manner. Interacts with IL18R1 and IL18RAP. Interacts with TLR2. Interacts with RAB11FIP2. In terms of processing, myristoylated. Required for membrane association which is critical for its ability to initiate efficient signaling. Phosphorylated by PRKCE in response to LPS. Phosphorylation is essential for its function. It is depleted from the membrane upon phosphorylation. Tyrosine phosphorylation is inhibited by phosphatase PTPN4.

The protein localises to the cytoplasm. It localises to the golgi apparatus. It is found in the cell membrane. Its subcellular location is the early endosome. The protein resides in the late endosome. The protein localises to the endoplasmic reticulum. It localises to the cell projection. It is found in the phagocytic cup. Functions as a sorting adapter in different signaling pathways to facilitate downstream signaling leading to type I interferon induction. In TLR4 signaling, physically bridges TLR4 and TICAM1 and functionally transmits signal to TICAM1 in early endosomes after endocytosis of TLR4. In TLR2 signaling, physically bridges TLR2 and MYD88 and is required for the TLR2-dependent movement of MYD88 to endosomes following ligand engagement. Involved in IL-18 signaling and is proposed to function as a sorting adapter for MYD88 in IL-18 signaling during adaptive immune response. Forms a complex with RAB11FIP2 that is recruited to the phagosomes to promote the activation of the actin-regulatory GTPases RAC1 and CDC42 and subsequent phagocytosis of Gram-negative bacteria. The polypeptide is TIR domain-containing adapter molecule 2 (Ticam2) (Mus musculus (Mouse)).